A 123-amino-acid polypeptide reads, in one-letter code: Holo-[acyl-carrier-protein] synthase (123 aa).

Mg(2+) contacts are provided by Asp8 and Glu55.

This sequence belongs to the P-Pant transferase superfamily. AcpS family. The cofactor is Mg(2+).

The protein localises to the cytoplasm. The catalysed reaction is apo-[ACP] + CoA = holo-[ACP] + adenosine 3',5'-bisphosphate + H(+). In terms of biological role, transfers the 4'-phosphopantetheine moiety from coenzyme A to a Ser of acyl-carrier-protein. The chain is Holo-[acyl-carrier-protein] synthase from Solidesulfovibrio magneticus (strain ATCC 700980 / DSM 13731 / RS-1) (Desulfovibrio magneticus).